Here is an 895-residue protein sequence, read N- to C-terminus: MASSSKASDSSSQRSKRSDQGTGREAAPASVVPIHGNLTQLIRQIKSRRLLYIKEKLEANRKTLQRHSCSLFDVAAAAEVASRGSDGGNALSQRAAEGQFRLAGSDLAHGIGERDVVYMQEENLASGTLVLSSSGAAAQRTVVRFVKLPLVERIPPYTTWIFLDKNQRMADDQSVVGRRRIYYDPVGNEALICSDSDEEIPEPEEEKHFFTEGEDQLIWRATQEHGLNREVVNVLCQFIDSTPSEIEERSEVLFEKNEKNSGSSDKIERQLSLDKTMDAVLDSFDNLFCRRCLVFDCRLHGCSQNLVFPTEKQPYSFEPDENKKPCGRQCYLRWRGGFQEIHDVGLSGCATYNMESGTVSHKVDVSIMSESEDSNREKGNIRSMTLVGTSGSKIISSVSAEESTTPPSADTSETENASSDMPPSSLRKYKISKRGPRYRERSPGKRQKVFTSDISFASNILNKLSIPEIRDTRLESREPGGDKLQILDESTKKTSSKDICGESPITTTENMGIESKKVSSTKNFLEHTLSCWSALERDLYLKGIEIFGKNSCLIARNLLSGMKTCMEVANYMYNNGAAMAKRPLLNKSISGDFAETEQDYMEQDMVARTRIYRRRGRNRKLKYTWKSAGHPTVRKRIGDGKQWYTQYNPCVCQQMCGKDCPCVENGTCCEKYCGCSKSCKNKFRGCHCAKSQCRSRQCPCFAASRECDPDVCRNCWVSCGDGSLGEPPARGDGYQCGNMKLLLKQQQRILLGRSDVAGWGAFIKNPVNKNDYLGEYTGELISHKEADKRGKIYDRANSSFLFDLNDQYVLDAYRKGDKLKFANHSSNPNCYAKVMLVAGDHRVGIYAKEHIEASEELFYDYRYGPDQAPAWARRPEGSKKDEASVSHHRAHKVAR.

Positions 1–13 (MASSSKASDSSSQ) are enriched in low complexity. Disordered regions lie at residues 1 to 30 (MASSSKASDSSSQRSKRSDQGTGREAAPAS) and 396 to 446 (SSVS…PGKR). Positions 396 to 422 (SSVSAEESTTPPSADTSETENASSDMP) are enriched in polar residues. Over residues 427-436 (RKYKISKRGP) the composition is skewed to basic residues. Residues 528–578 (TLSCWSALERDLYLKGIEIFGKNSCLIARNLLSGMKTCMEVANYMYNNGAA) form the SANT domain. The 105-residue stretch at 628–732 (AGHPTVRKRI…SLGEPPARGD (105 aa)) folds into the CXC domain. Residues 747–862 (QRILLGRSDV…ASEELFYDYR (116 aa)) enclose the SET domain. Positions 870–895 (AWARRPEGSKKDEASVSHHRAHKVAR) are disordered. Over residues 873-885 (RRPEGSKKDEASV) the composition is skewed to basic and acidic residues. Over residues 886–895 (SHHRAHKVAR) the composition is skewed to basic residues.

It belongs to the class V-like SAM-binding methyltransferase superfamily. Histone-lysine methyltransferase family. EZ subfamily. As to expression, widely expressed.

It localises to the nucleus. It carries out the reaction L-lysyl(27)-[histone H3] + 3 S-adenosyl-L-methionine = N(6),N(6),N(6)-trimethyl-L-lysyl(27)-[histone H3] + 3 S-adenosyl-L-homocysteine + 3 H(+). Its function is as follows. Polycomb group (PcG) protein. Catalytic subunit of some PcG multiprotein complex, which methylates 'Lys-27' of histone H3, leading to transcriptional repression of the affected target genes. PcG proteins are not required to initiate repression, but to maintain it during later stages of development. The chain is Histone-lysine N-methyltransferase EZ3 (EZ3) from Zea mays (Maize).